The chain runs to 254 residues: Phosphoribosylaminoimidazole-succinocarboxamide synthase (254 aa).

The protein belongs to the SAICAR synthetase family.

It catalyses the reaction 5-amino-1-(5-phospho-D-ribosyl)imidazole-4-carboxylate + L-aspartate + ATP = (2S)-2-[5-amino-1-(5-phospho-beta-D-ribosyl)imidazole-4-carboxamido]succinate + ADP + phosphate + 2 H(+). It functions in the pathway purine metabolism; IMP biosynthesis via de novo pathway; 5-amino-1-(5-phospho-D-ribosyl)imidazole-4-carboxamide from 5-amino-1-(5-phospho-D-ribosyl)imidazole-4-carboxylate: step 1/2. The protein is Phosphoribosylaminoimidazole-succinocarboxamide synthase of Sinorhizobium fredii (strain NBRC 101917 / NGR234).